The primary structure comprises 255 residues: Hydroxyacylglutathione hydrolase (255 aa).

7 residues coordinate Zn(2+): histidine 56, histidine 58, aspartate 60, histidine 61, histidine 114, aspartate 133, and histidine 171.

The protein belongs to the metallo-beta-lactamase superfamily. Glyoxalase II family. As to quaternary structure, monomer. The cofactor is Zn(2+).

The enzyme catalyses an S-(2-hydroxyacyl)glutathione + H2O = a 2-hydroxy carboxylate + glutathione + H(+). Its pathway is secondary metabolite metabolism; methylglyoxal degradation; (R)-lactate from methylglyoxal: step 2/2. Functionally, thiolesterase that catalyzes the hydrolysis of S-D-lactoyl-glutathione to form glutathione and D-lactic acid. This chain is Hydroxyacylglutathione hydrolase, found in Nitrobacter hamburgensis (strain DSM 10229 / NCIMB 13809 / X14).